The sequence spans 418 residues: L-rhamnose isomerase (418 aa).

Residues His-262, Asp-294, and Asp-296 each coordinate Mn(2+).

The protein belongs to the rhamnose isomerase family. It depends on Mn(2+) as a cofactor.

The protein localises to the cytoplasm. It catalyses the reaction L-rhamnopyranose = L-rhamnulose. It participates in carbohydrate degradation; L-rhamnose degradation; glycerone phosphate from L-rhamnose: step 1/3. Functionally, catalyzes the interconversion of L-rhamnose and L-rhamnulose. The sequence is that of L-rhamnose isomerase from Bacteroides thetaiotaomicron (strain ATCC 29148 / DSM 2079 / JCM 5827 / CCUG 10774 / NCTC 10582 / VPI-5482 / E50).